A 404-amino-acid polypeptide reads, in one-letter code: S-adenosylmethionine synthase (404 aa).

H18 contributes to the ATP binding site. D20 lines the Mg(2+) pocket. E46 serves as a coordination point for K(+). L-methionine is bound by residues E59 and Q102. The flexible loop stretch occupies residues 102–112; that stretch reads QSPDIAQGVDT. ATP contacts are provided by residues 177–179, 249–250, D258, 264–265, A281, and K285; these read DGK, KF, and RK. D258 provides a ligand contact to L-methionine. K289 provides a ligand contact to L-methionine.

The protein belongs to the AdoMet synthase family. Homotetramer; dimer of dimers. It depends on Mg(2+) as a cofactor. K(+) serves as cofactor.

The protein resides in the cytoplasm. The enzyme catalyses L-methionine + ATP + H2O = S-adenosyl-L-methionine + phosphate + diphosphate. It functions in the pathway amino-acid biosynthesis; S-adenosyl-L-methionine biosynthesis; S-adenosyl-L-methionine from L-methionine: step 1/1. Its function is as follows. Catalyzes the formation of S-adenosylmethionine (AdoMet) from methionine and ATP. The overall synthetic reaction is composed of two sequential steps, AdoMet formation and the subsequent tripolyphosphate hydrolysis which occurs prior to release of AdoMet from the enzyme. The polypeptide is S-adenosylmethionine synthase (Nocardia farcinica (strain IFM 10152)).